A 97-amino-acid chain; its full sequence is NELL2-interacting cell ontogeny regulator 1 (97 aa).

The signal sequence occupies residues 1-35 (MAPLPPCGPPRSPPPRLLLLLLLLSATLLGAPARA).

This sequence belongs to the NICOL family. As to quaternary structure, interacts with NELL2; triggers epididymal differentiation. Interacts with cell surface receptor TFRC; the interaction mediates uptake of NICOL1 into fibroblasts.

The protein resides in the secreted. Its subcellular location is the cytoplasm. It is found in the perinuclear region. MRNA-binding protein which interacts with a range of target mRNAs including SERPINE1, ACTA2, CCN2 and COL4A1 and may promote extracellular matrix production. Binds to the 3'-UTR of SERPINE1 mRNA and stabilizes the mRNA, possibly by competing for binding with SERBP1 and preventing SERBP1-mediated mRNA degradation. Also binds to the 3'-UTR of ACTA2. Testis-derived lumicrine factor that triggers epididymal differentiation and sperm maturation. The chain is NELL2-interacting cell ontogeny regulator 1 from Bos taurus (Bovine).